Consider the following 95-residue polypeptide: Acylphosphatase (95 aa).

The region spanning R6–Y94 is the Acylphosphatase-like domain. Catalysis depends on residues R21 and N39.

The protein belongs to the acylphosphatase family.

The catalysed reaction is an acyl phosphate + H2O = a carboxylate + phosphate + H(+). The sequence is that of Acylphosphatase (acyP) from Caldivirga maquilingensis (strain ATCC 700844 / DSM 13496 / JCM 10307 / IC-167).